Consider the following 180-residue polypeptide: Cell division protein SepF (180 aa).

A disordered region spans residues leucine 21–histidine 40. The span at aspartate 27–histidine 40 shows a compositional bias: basic and acidic residues.

This sequence belongs to the SepF family. Homodimer. Interacts with FtsZ.

The protein resides in the cytoplasm. Cell division protein that is part of the divisome complex and is recruited early to the Z-ring. Probably stimulates Z-ring formation, perhaps through the cross-linking of FtsZ protofilaments. Its function overlaps with FtsA. The sequence is that of Cell division protein SepF from Frankia casuarinae (strain DSM 45818 / CECT 9043 / HFP020203 / CcI3).